Reading from the N-terminus, the 289-residue chain is MSKAREIRTKIASIKNTQKITRAMELVAASKMRKAQDRMAISRPYASKIRKVISHVAASHAEYPHPYLQQRENIKRVGYIIVTTDRGLCGGLNVNLFRTAIADMKKWQADNIGMDLCVIGRKGEAFFRRYGGNVLAVADHLGDAPEVQDIIGIVKVMLDQYDKQQIDAIYIATNEFVNTMVQKPLVRQLLPLKTDEEEVEGGYWDYIYEPDESKDLLEMLLVRYIESQVYQAVIENIACEQSARMVAMKNATENAGQLIDELRLIYNKARQAGITREIAEIVAGAAAVE.

The protein belongs to the ATPase gamma chain family. In terms of assembly, F-type ATPases have 2 components, CF(1) - the catalytic core - and CF(0) - the membrane proton channel. CF(1) has five subunits: alpha(3), beta(3), gamma(1), delta(1), epsilon(1). CF(0) has three main subunits: a, b and c.

The protein resides in the cell inner membrane. Produces ATP from ADP in the presence of a proton gradient across the membrane. The gamma chain is believed to be important in regulating ATPase activity and the flow of protons through the CF(0) complex. In Coxiella burnetii (strain CbuK_Q154) (Coxiella burnetii (strain Q154)), this protein is ATP synthase gamma chain.